Here is a 59-residue protein sequence, read N- to C-terminus: UPF0434 protein lpl1884 (59 aa).

It belongs to the UPF0434 family.

The chain is UPF0434 protein lpl1884 from Legionella pneumophila (strain Lens).